The sequence spans 367 residues: Alanine racemase (367 aa).

Lys-40 functions as the Proton acceptor; specific for D-alanine in the catalytic mechanism. An N6-(pyridoxal phosphate)lysine modification is found at Lys-40. Arg-136 lines the substrate pocket. Tyr-263 functions as the Proton acceptor; specific for L-alanine in the catalytic mechanism. Met-310 lines the substrate pocket.

Belongs to the alanine racemase family. Pyridoxal 5'-phosphate is required as a cofactor.

The catalysed reaction is L-alanine = D-alanine. It participates in amino-acid biosynthesis; D-alanine biosynthesis; D-alanine from L-alanine: step 1/1. Catalyzes the interconversion of L-alanine and D-alanine. May also act on other amino acids. In Lactococcus lactis subsp. cremoris (strain MG1363), this protein is Alanine racemase (alr).